The primary structure comprises 646 residues: Long-chain fatty acid transport protein 1 (646 aa).

The Extracellular portion of the chain corresponds to 1 to 13 (MRAPGAGTASVAS). Residues 14–34 (LALLWFLGLPWTWSAAAAFCV) form a helical membrane-spanning segment. Residues 35–646 (YVGGGGWRFL…ARICAGDFSL (612 aa)) lie on the Cytoplasmic side of the membrane. The segment at 191-475 (EVSEQLGKSL…YVSDSATNKK (285 aa)) is sufficient for oligomerization. Residue 246–257 (YIYTSGTTGLPK) coordinates AMP.

It belongs to the ATP-dependent AMP-binding enzyme family. As to quaternary structure, self-associates. May function as a homodimer. Interacts with EPRS1; mediates the translocation of SLC27A1 from the cytoplasm to the plasma membrane thereby increasing the uptake of long-chain fatty acids. Interacts with DGAT2 and this interaction is enhanced in the presence of ZFYVE1. Higher expression in white adipose tissue than in heart. Highest expression in skeletal muscle, heart and fat. Lower levels in brain, kidney, lung, liver and testis. No expression in spleen or intestine.

The protein resides in the cell membrane. The protein localises to the mitochondrion outer membrane. It localises to the endomembrane system. It is found in the cytoplasm. The enzyme catalyses a fatty acid(in) = a fatty acid(out). It catalyses the reaction (9Z)-octadecenoate(out) = (9Z)-octadecenoate(in). It carries out the reaction hexadecanoate(out) = hexadecanoate(in). The catalysed reaction is (5Z,8Z,11Z,14Z)-eicosatetraenoate(out) = (5Z,8Z,11Z,14Z)-eicosatetraenoate(in). The enzyme catalyses (9Z,12Z)-octadecadienoate(out) = (9Z,12Z)-octadecadienoate(in). It catalyses the reaction a long-chain fatty acid + ATP + CoA = a long-chain fatty acyl-CoA + AMP + diphosphate. It carries out the reaction (5Z,8Z,11Z,14Z)-eicosatetraenoate + ATP + CoA = (5Z,8Z,11Z,14Z)-eicosatetraenoyl-CoA + AMP + diphosphate. The catalysed reaction is a very long-chain fatty acid + ATP + CoA = a very long-chain fatty acyl-CoA + AMP + diphosphate. The enzyme catalyses tetracosanoate + ATP + CoA = tetracosanoyl-CoA + AMP + diphosphate. Its activity is regulated as follows. Inhibited by Triacsin C. Both insulin and muscle contraction stimulate translocation to the plasma membrane in muscle, increasing fatty acid transport activity. Mediates the import of long-chain fatty acids (LCFA) into the cell by facilitating their transport at the plasma membrane. Also functions as an acyl-CoA ligase catalyzing the ATP-dependent formation of fatty acyl-CoA using LCFA and very-long-chain fatty acids (VLCFA) as substrates, which prevents fatty acid efflux from cells and might drive more fatty acid uptake. May act directly as a bona fide transporter, or alternatively, in a cytoplasmic or membrane-associated multimeric protein complex to trap and draw fatty acids towards accumulation. Plays a pivotal role in regulating available LCFA substrates from exogenous sources in tissues undergoing high levels of beta-oxidation or triglyceride synthesis. May be involved in regulation of cholesterol metabolism. Probably involved in fatty acid transport across the blood barrier. The chain is Long-chain fatty acid transport protein 1 from Mus musculus (Mouse).